Consider the following 187-residue polypeptide: Mast cell-expressed membrane protein 1 (187 aa).

Residues 1–85 (MEVEEIYKHQ…PCWLYRAILS (85 aa)) are Cytoplasmic-facing. The tract at residues 49-71 (DHAKGGHSRPTSQVPAQCRPPSD) is disordered. A helical; Signal-anchor for type II membrane protein membrane pass occupies residues 86–106 (LYILLALAFVLCIILSAFIMV). Residues 107 to 187 (KNAEMSKELL…LQKMPQSSPQ (81 aa)) lie on the Extracellular side of the membrane. Asn-124 is a glycosylation site (N-linked (GlcNAc...) asparagine).

Expressed specifically in mast cells. Found primarily in lung.

It is found in the membrane. This Homo sapiens (Human) protein is Mast cell-expressed membrane protein 1.